A 58-amino-acid chain; its full sequence is Small ribosomal subunit protein bS21 (58 aa).

This sequence belongs to the bacterial ribosomal protein bS21 family.

This chain is Small ribosomal subunit protein bS21, found in Prochlorococcus marinus (strain MIT 9301).